The primary structure comprises 88 residues: U1-hexatoxin-Iw1c (88 aa).

An N-terminal signal peptide occupies residues 1–17 (LKFVVLICLVIMASTSA). Q18 carries the post-translational modification Pyrrolidone carboxylic acid. Cystine bridges form between C20–C31, C25–C39, C30–C65, C49–C73, and C67–C80. Positions 86 to 88 (RSE) are excised as a propeptide.

It belongs to the MIT-like AcTx family. Expressed by the venom gland.

Its subcellular location is the secreted. In Illawarra wisharti (Illawarra funnel-web spider), this protein is U1-hexatoxin-Iw1c.